A 331-amino-acid polypeptide reads, in one-letter code: Glycerol-3-phosphate dehydrogenase [NAD(P)+] (331 aa).

The NADPH site is built by Trp11 and Lys101. Positions 101, 132, and 134 each coordinate sn-glycerol 3-phosphate. Ala136 is an NADPH binding site. Sn-glycerol 3-phosphate-binding residues include Lys188, Asp241, Ser251, Arg252, and Asn253. Lys188 acts as the Proton acceptor in catalysis. Arg252 contributes to the NADPH binding site. Glu278 lines the NADPH pocket.

Belongs to the NAD-dependent glycerol-3-phosphate dehydrogenase family.

Its subcellular location is the cytoplasm. The enzyme catalyses sn-glycerol 3-phosphate + NAD(+) = dihydroxyacetone phosphate + NADH + H(+). It carries out the reaction sn-glycerol 3-phosphate + NADP(+) = dihydroxyacetone phosphate + NADPH + H(+). The protein operates within membrane lipid metabolism; glycerophospholipid metabolism. In terms of biological role, catalyzes the reduction of the glycolytic intermediate dihydroxyacetone phosphate (DHAP) to sn-glycerol 3-phosphate (G3P), the key precursor for phospholipid synthesis. In Phytoplasma mali (strain AT), this protein is Glycerol-3-phosphate dehydrogenase [NAD(P)+].